Here is a 456-residue protein sequence, read N- to C-terminus: Bestrophin homolog 18 (456 aa).

A run of 4 helical transmembrane segments spans residues 29–49 (WSAIWIQYSVWLGLYFLVSAI), 83–103 (GFFIAGVLRRFWYLYDIIGFI), 234–254 (IIYPTIVCLAVHMYFFVGILA), and 267–287 (MIDLVFPFMTSIQFVFYMGWL). The tract at residues 416–456 (ASSSRSLERQRSPGSFRMETLTPGSPTNTPIEPIDKIDKKK) is disordered.

This sequence belongs to the anion channel-forming bestrophin (TC 1.A.46) family. Calcium-sensitive chloride channel subfamily. As to quaternary structure, forms oligomers.

It localises to the cell membrane. Its function is as follows. Forms chloride channels. In Caenorhabditis elegans, this protein is Bestrophin homolog 18 (best-18).